We begin with the raw amino-acid sequence, 372 residues long: Flap endonuclease 1 (372 aa).

Positions 1-105 (MGVKGLNQLI…GELEKRLLRR (105 aa)) are N-domain. Asp-34 is a binding site for Mg(2+). Residues Arg-47 and Arg-71 each contribute to the DNA site. Asp-87, Glu-159, Glu-161, Asp-180, and Asp-182 together coordinate Mg(2+). Residues 123–254 (EVLKFEKRLV…ATAFKLIKEH (132 aa)) form an I-domain region. Position 159 (Glu-159) interacts with DNA. DNA is bound by residues Gly-232 and Asp-234. Mg(2+) is bound at residue Asp-234. An interaction with PCNA region spans residues 339 to 347 (VQGRLDGFF). Positions 353 to 366 (DDKKRKADPKESKA) are enriched in basic and acidic residues. Residues 353-372 (DDKKRKADPKESKASKKKKK) form a disordered region.

It belongs to the XPG/RAD2 endonuclease family. FEN1 subfamily. In terms of assembly, interacts with PCNA. Three molecules of RAD27 bind to one PCNA trimer with each molecule binding to one PCNA monomer. PCNA stimulates the nuclease activity without altering cleavage specificity. Mg(2+) serves as cofactor. Post-translationally, phosphorylated. Phosphorylation upon DNA damage induces relocalization to the nuclear plasma.

It localises to the nucleus. Its subcellular location is the nucleolus. It is found in the nucleoplasm. The protein resides in the mitochondrion. Its function is as follows. Structure-specific nuclease with 5'-flap endonuclease and 5'-3' exonuclease activities involved in DNA replication and repair. During DNA replication, cleaves the 5'-overhanging flap structure that is generated by displacement synthesis when DNA polymerase encounters the 5'-end of a downstream Okazaki fragment. It enters the flap from the 5'-end and then tracks to cleave the flap base, leaving a nick for ligation. Also involved in the long patch base excision repair (LP-BER) pathway, by cleaving within the apurinic/apyrimidinic (AP) site-terminated flap. Acts as a genome stabilization factor that prevents flaps from equilibrating into structures that lead to duplications and deletions. Also possesses 5'-3' exonuclease activity on nicked or gapped double-stranded DNA, and exhibits RNase H activity. Also involved in replication and repair of rDNA and in repairing mitochondrial DNA. This is Flap endonuclease 1 from Candida albicans (strain WO-1) (Yeast).